A 158-amino-acid chain; its full sequence is Large ribosomal subunit protein uL23 (158 aa).

The interval 1-43 (MPPKSSTKAEPKASSAKTQVAKAKSAKKAVVKGTSSKTQRRIR) is disordered. Low complexity predominate over residues 12–23 (KASSAKTQVAKA).

Belongs to the universal ribosomal protein uL23 family.

This protein binds to a specific region on the 26S rRNA. This chain is Large ribosomal subunit protein uL23, found in Puccinia graminis (Black stem rust fungus).